The following is a 214-amino-acid chain: Dephospho-CoA kinase (214 aa).

Positions 20-214 constitute a DPCK domain; the sequence is RIGITGGIAS…KLQLKKLYKF (195 aa). An ATP-binding site is contributed by 28-33; the sequence is ASGKTI.

This sequence belongs to the CoaE family.

Its subcellular location is the cytoplasm. It carries out the reaction 3'-dephospho-CoA + ATP = ADP + CoA + H(+). The protein operates within cofactor biosynthesis; coenzyme A biosynthesis; CoA from (R)-pantothenate: step 5/5. In terms of biological role, catalyzes the phosphorylation of the 3'-hydroxyl group of dephosphocoenzyme A to form coenzyme A. The sequence is that of Dephospho-CoA kinase from Prochlorococcus marinus (strain NATL2A).